The sequence spans 475 residues: Chromosomal replication initiator protein DnaA (475 aa).

The segment at Met1 to Asp73 is domain I, interacts with DnaA modulators. Positions Asp73–Ser131 are domain II. The interval Pro132–Ser354 is domain III, AAA+ region. 4 residues coordinate ATP: Gly179, Gly181, Lys182, and Thr183. The tract at residues Lys355–Glu475 is domain IV, binds dsDNA.

It belongs to the DnaA family. As to quaternary structure, oligomerizes as a right-handed, spiral filament on DNA at oriC.

Its subcellular location is the cytoplasm. Functionally, plays an essential role in the initiation and regulation of chromosomal replication. ATP-DnaA binds to the origin of replication (oriC) to initiate formation of the DNA replication initiation complex once per cell cycle. Binds the DnaA box (a 9 base pair repeat at the origin) and separates the double-stranded (ds)DNA. Forms a right-handed helical filament on oriC DNA; dsDNA binds to the exterior of the filament while single-stranded (ss)DNA is stabiized in the filament's interior. The ATP-DnaA-oriC complex binds and stabilizes one strand of the AT-rich DNA unwinding element (DUE), permitting loading of DNA polymerase. After initiation quickly degrades to an ADP-DnaA complex that is not apt for DNA replication. Binds acidic phospholipids. In Nitrobacter hamburgensis (strain DSM 10229 / NCIMB 13809 / X14), this protein is Chromosomal replication initiator protein DnaA.